Consider the following 104-residue polypeptide: Large ribosomal subunit protein uL24 (104 aa).

It belongs to the universal ribosomal protein uL24 family. Part of the 50S ribosomal subunit.

Functionally, one of two assembly initiator proteins, it binds directly to the 5'-end of the 23S rRNA, where it nucleates assembly of the 50S subunit. One of the proteins that surrounds the polypeptide exit tunnel on the outside of the subunit. In Clostridium perfringens (strain ATCC 13124 / DSM 756 / JCM 1290 / NCIMB 6125 / NCTC 8237 / Type A), this protein is Large ribosomal subunit protein uL24.